The sequence spans 166 residues: Lithostathine-1-alpha (166 aa).

Residues 1–22 (MAQTSSYFMLISCLMFLSQSQG) form the signal peptide. At Gln23 the chain carries Pyrrolidone carboxylic acid. O-linked (GalNAc) threonine glycosylation occurs at Thr27. Residues 34–164 (ISCPEGTNAY…EDKFSFVCKF (131 aa)) enclose the C-type lectin domain. 3 disulfides stabilise this stretch: Cys36–Cys47, Cys64–Cys162, and Cys137–Cys154.

The composition of the O-linked carbohydrate on Thr-27 is complex and varied. In the crystallographic structure, the attached sugar appears to be N-acetylglucosamine, typical of an intracellular protein, rather than N-acetylgalactosamine. In pancreatic acinar cells and, in lower levels, in brain. Enhanced expression of PSP-related transcripts and intraneuronal accumulation of PSP-like proteins is found in brain from Alzheimer disease and Down syndrome patients.

The protein resides in the secreted. Functionally, might act as an inhibitor of spontaneous calcium carbonate precipitation. May be associated with neuronal sprouting in brain, and with brain and pancreas regeneration. This is Lithostathine-1-alpha (REG1A) from Homo sapiens (Human).